The chain runs to 179 residues: Large ribosomal subunit protein uL5 (179 aa).

This sequence belongs to the universal ribosomal protein uL5 family. Part of the 50S ribosomal subunit; part of the 5S rRNA/L5/L18/L25 subcomplex. Contacts the 5S rRNA and the P site tRNA. Forms a bridge to the 30S subunit in the 70S ribosome.

Its function is as follows. This is one of the proteins that bind and probably mediate the attachment of the 5S RNA into the large ribosomal subunit, where it forms part of the central protuberance. In the 70S ribosome it contacts protein S13 of the 30S subunit (bridge B1b), connecting the 2 subunits; this bridge is implicated in subunit movement. Contacts the P site tRNA; the 5S rRNA and some of its associated proteins might help stabilize positioning of ribosome-bound tRNAs. This is Large ribosomal subunit protein uL5 from Mannheimia succiniciproducens (strain KCTC 0769BP / MBEL55E).